Here is a 748-residue protein sequence, read N- to C-terminus: 5-methyltetrahydropteroyltriglutamate--homocysteine methyltransferase (748 aa).

Residues 18–21 (REWK) and K112 contribute to the 5-methyltetrahydropteroyltri-L-glutamate site. Residues 420 to 422 (IGS) and E473 contribute to the L-homocysteine site. L-methionine-binding positions include 420 to 422 (IGS) and E473. 5-methyltetrahydropteroyltri-L-glutamate is bound at residue W550. Position 588 (D588) interacts with L-homocysteine. An L-methionine-binding site is contributed by D588. E594 lines the 5-methyltetrahydropteroyltri-L-glutamate pocket. Zn(2+) is bound by residues H630, C632, and E654. H683 (proton donor) is an active-site residue. A Zn(2+)-binding site is contributed by C715.

This sequence belongs to the vitamin-B12 independent methionine synthase family. It depends on Zn(2+) as a cofactor.

It carries out the reaction 5-methyltetrahydropteroyltri-L-glutamate + L-homocysteine = tetrahydropteroyltri-L-glutamate + L-methionine. It participates in amino-acid biosynthesis; L-methionine biosynthesis via de novo pathway; L-methionine from L-homocysteine (MetE route): step 1/1. In terms of biological role, catalyzes the transfer of a methyl group from 5-methyltetrahydrofolate to homocysteine resulting in methionine formation. The polypeptide is 5-methyltetrahydropteroyltriglutamate--homocysteine methyltransferase (Staphylococcus epidermidis (strain ATCC 12228 / FDA PCI 1200)).